Here is a 197-residue protein sequence, read N- to C-terminus: Thymidine kinase (197 aa).

Residues 9 to 16 (SAMDAGKT) and 87 to 90 (DEIH) contribute to the ATP site. Glu88 (proton acceptor) is an active-site residue. The Zn(2+) site is built by Cys145, Cys147, Cys187, and His190.

This sequence belongs to the thymidine kinase family. Homotetramer.

The protein resides in the cytoplasm. It catalyses the reaction thymidine + ATP = dTMP + ADP + H(+). In Francisella tularensis subsp. tularensis (strain SCHU S4 / Schu 4), this protein is Thymidine kinase.